We begin with the raw amino-acid sequence, 270 residues long: MPSSEASPAAGLSEDSTRHLPRILCLHGGGTNARIFKAQCRQLSAQLKRDFRFIYAEAPWISIAGPDVLAVYGQWGPFKRWLRWSPEQPDITTQETVKELDQCLARAVEADNACGTTGEVVAILGFSQGAKVAASVLYWQQRSGQSLGLRASNSGYRFGVLLAGSSPLVDLSTCEGDSNGLSENAWPGDDMIGPRALDCDTHKLIIPTLHVHGLQDRGLRLHRALMEDFCAPESTTLIEWDGVHRVPLNRAEVSRVAGQIRKLAGLTSNS.

Catalysis depends on charge relay system residues Ser127, Asp216, and His244.

It belongs to the LovG family.

It functions in the pathway mycotoxin biosynthesis. Its function is as follows. Esterase; part of the gene cluster that mediates the biosynthesis of the selective antifungal agent ascochitine, an o-quinone methide that plays a possible protective role against other microbial competitors in nature and is considered to be important for pathogenicity of legume-associated Didymella species. The pathway probably begins with the synthesis of a keto-aldehyde intermediate by the ascochitine non-reducing polyketide synthase pksAC from successive condensations of 4 malonyl-CoA units, presumably with a simple acetyl-CoA starter unit. Release of the keto-aldehyde intermediate is consistent with the presence of the C-terminal reductive release domain. The HR-PKS (orf7) probably makes a diketide starter unit which is passed to the non-reducing polyketide synthase pksAC for further extension, producing ascochital and ascochitine. The aldehyde dehydrogenase (orf1), the 2-oxoglutarate-dependent dioxygenase (orf3) and the dehydrogenase (orf9) are probably involved in subsequent oxidations of methyl groups to the carboxylic acid of the heterocyclic ring. The ascochitine gene cluster also includes a gene encoding a short peptide with a cupin domain (orf2) that is often found in secondary metabolite gene clusters and which function has still to be determined. The sequence is that of Esterase from Didymella fabae (Leaf and pod spot disease fungus).